The primary structure comprises 858 residues: Lysine-specific demethylase JMJ706 (858 aa).

The region spanning 103 to 144 (CPVYYPTKEEFEDPIGYIQKIAPVASKYGICKIVSPVSASVP) is the JmjN domain. Residues 250–420 (KSNWNLKNFS…LGSVASRRYA (171 aa)) enclose the JmjC domain. Histidine 293, glutamate 295, and histidine 388 together coordinate Fe cation. Residues 737–746 (QHNKRPEDYG) are compositionally biased toward basic and acidic residues. 2 disordered regions span residues 737-791 (QHNK…SAKQ) and 829-858 (SSSTNRVVEQGSSGQRFTRDDKSLGCWPAI). A compositionally biased stretch (polar residues) spans 829-844 (SSSTNRVVEQGSSGQR).

Requires Fe(2+) as cofactor.

The protein resides in the nucleus. The enzyme catalyses N(6),N(6),N(6)-trimethyl-L-lysyl(9)-[histone H3] + 2 2-oxoglutarate + 2 O2 = N(6)-methyl-L-lysyl(9)-[histone H3] + 2 formaldehyde + 2 succinate + 2 CO2. In terms of biological role, histone demethylase that demethylates 'Lys-9' (H3K9me) of histone H3 with a specific activity for H3K9me3 and H3K9me2. No activity on H3K4me3, H3K9me1, H3K27me2 and H3K36me3/2. Involved in the control of floral organ development by demethylating H3K9me3 and H3K9me2 in the promoter regions of DH1 and MADS47. The 'Lys-9' demethylation of these two genes is required for induction of their expression. The polypeptide is Lysine-specific demethylase JMJ706 (JMJ706) (Oryza sativa subsp. japonica (Rice)).